Consider the following 248-residue polypeptide: tRNA uridine(34) hydroxylase (248 aa).

The Rhodanese domain maps to 124–218; the sequence is TKQDVIVVDT…YLEDTQNKNN (95 aa). Catalysis depends on cysteine 178, which acts as the Cysteine persulfide intermediate.

It belongs to the TrhO family.

It carries out the reaction uridine(34) in tRNA + AH2 + O2 = 5-hydroxyuridine(34) in tRNA + A + H2O. Catalyzes oxygen-dependent 5-hydroxyuridine (ho5U) modification at position 34 in tRNAs. In Rickettsia bellii (strain OSU 85-389), this protein is tRNA uridine(34) hydroxylase.